A 74-amino-acid chain; its full sequence is Sec-independent protein translocase protein TatA (74 aa).

The chain crosses the membrane as a helical span at residues 1–21 (MGTFSIWHWLIVLLVVVVVFG). The disordered stretch occupies residues 50–74 (TAPAGQVANQSTADQTIDVQTKPKG). Over residues 56–68 (VANQSTADQTIDV) the composition is skewed to polar residues.

It belongs to the TatA/E family. The Tat system comprises two distinct complexes: a TatABC complex, containing multiple copies of TatA, TatB and TatC subunits, and a separate TatA complex, containing only TatA subunits. Substrates initially bind to the TatABC complex, which probably triggers association of the separate TatA complex to form the active translocon.

It localises to the cell inner membrane. In terms of biological role, part of the twin-arginine translocation (Tat) system that transports large folded proteins containing a characteristic twin-arginine motif in their signal peptide across membranes. TatA could form the protein-conducting channel of the Tat system. The polypeptide is Sec-independent protein translocase protein TatA (Verminephrobacter eiseniae (strain EF01-2)).